Reading from the N-terminus, the 119-residue chain is NLYQFKNMIKCTVPSRSWWDFADYGCYCGRGGSGTPVDDLDRCCQVHDNCYNEAEKISGCWPYFKTYSYECSQGTLTCKGDNNACAASVCDCDRLAAICFAGAPYNDNNYNIDLKARCQ.

7 cysteine pairs are disulfide-bonded: Cys-11/Cys-71, Cys-26/Cys-118, Cys-28/Cys-44, Cys-43/Cys-99, Cys-50/Cys-92, Cys-60/Cys-85, and Cys-78/Cys-90. The Ca(2+) site is built by Tyr-27, Gly-29, and Gly-31. Residue His-47 is part of the active site. A Ca(2+)-binding site is contributed by Asp-48. Residue Asp-93 is part of the active site.

This sequence belongs to the phospholipase A2 family. Group I subfamily. D49 sub-subfamily. Homotrimer. Requires Ca(2+) as cofactor. As to expression, expressed by the venom gland.

The protein resides in the secreted. The enzyme catalyses a 1,2-diacyl-sn-glycero-3-phosphocholine + H2O = a 1-acyl-sn-glycero-3-phosphocholine + a fatty acid + H(+). In terms of biological role, PLA2 catalyzes the calcium-dependent hydrolysis of the 2-acyl groups in 3-sn-phosphoglycerides. The protein is Acidic phospholipase A2 2 of Naja naja (Indian cobra).